The primary structure comprises 341 residues: Major histocompatibility complex class I-related protein 1 (341 aa).

An N-terminal signal peptide occupies residues 1 to 22 (MGELMAFLLPLIIVLMVKHSDS). Residues 23-109 (RTHSLRYFRL…KRLQRHYNHS (87 aa)) are alpha-1. An antigen-binding cleft region spans residues 23 to 201 (RTHSLRYFRL…EYGKDTLQRT (179 aa)). Residues 23-302 (RTHSLRYFRL…QESETIPLVM (280 aa)) lie on the Extracellular side of the membrane. The 5-(2-oxoethylideneamino)-6-(D-ribitylamino)uracil site is built by arginine 31, serine 46, and lysine 65. 5-(2-oxopropylideneamino)-6-(D-ribitylamino)uracil contacts are provided by arginine 31, serine 46, and lysine 65. 7-hydroxy-6-methyl-8-(1-D-ribityl)lumazine is bound by residues arginine 31, serine 46, and lysine 65. Arginine 31 serves as a coordination point for 8-(9H-purin-6-yl)-2-oxa-8-azabicyclo[3.3.1]nona-3,6-diene-4,6-dicarbaldehyde. Residues lysine 65 and histidine 80 each contribute to the 8-(9H-purin-6-yl)-2-oxa-8-azabicyclo[3.3.1]nona-3,6-diene-4,6-dicarbaldehyde site. Lysine 65 contributes to the 2-amino-4-oxopteridine-6-carbaldehyde binding site. Lysine 65 lines the pyridoxal pocket. An N-linked (GlcNAc...) asparagine glycan is attached at asparagine 107. An alpha-2 region spans residues 110 to 201 (GSHTYQRMIG…EYGKDTLQRT (92 aa)). Residues arginine 116, tyrosine 174, and glutamine 175 each contribute to the 5-(2-oxoethylideneamino)-6-(D-ribitylamino)uracil site. Residues arginine 116, tyrosine 174, and glutamine 175 each coordinate 5-(2-oxopropylideneamino)-6-(D-ribitylamino)uracil. The 7-hydroxy-6-methyl-8-(1-D-ribityl)lumazine site is built by arginine 116, tyrosine 174, and glutamine 175. Residue arginine 116 coordinates 8-(9H-purin-6-yl)-2-oxa-8-azabicyclo[3.3.1]nona-3,6-diene-4,6-dicarbaldehyde. 2 disulfide bridges follow: cysteine 120-cysteine 183 and cysteine 222-cysteine 278. The alpha-3 stretch occupies residues 202–293 (EPPLVRVNRK…GVHMVLQVPQ (92 aa)). The Ig-like C1-type domain maps to 203 to 299 (PPLVRVNRKE…QVPQESETIP (97 aa)). A connecting peptide region spans residues 294-302 (ESETIPLVM). A helical membrane pass occupies residues 303–323 (KAVSGSIVLVIVLAGVGVLVW). Over 324–341 (RRRPREQNGAIYLPTPDR) the chain is Cytoplasmic.

The protein belongs to the MHC class I family. Heterotrimer that consists of MR1, B2M and a metabolite antigen. Major classes of metabolite ligands presented by MR1 include riboflavin-related antigens, pyrimidines and ribityl lumazines, nucleobase adducts and folate derivatives. Forms reversible covalent Schiff base complexes with microbial pyrimidine-based metabolite, which serves as a molecular switch triggering complete folding, stable association with B2M and translocation of the ternary complex from endoplasmic reticulum to the plasma membrane. Alternatively, forms non-Schiff base complexes with ribityl lumazines. On antigen-presenting cells, the ternary complex interacts with TCR on MR1-restricted T cells, predominantly represented by CD8-positive and CD4- and CD8-double negative MAIT cell subsets. Interacts with TAPBP and TAPBPL chaperones in the endoplasmic reticulum. TAPBP associated or not with MHC class I peptide loading complex binds ligand-free MR1 or MR1-B2M complex, providing for stable MR1 pools ready for metabolite antigen processing. TAPBPL interacts with MR1 in a ligand-independent way; this interaction may stabilize MR1 pool and facilitate ligand loading and dissociation. MR1-B2M heterodimer adopts a topology similar to classical MHC class I molecules, with alpha-1 and alpha-2 domains of MR1 forming the antigen-binding cleft composed of two alpha-helices resting on a floor of 7-stranded anti-parallel beta-pleated sheet. The ribityl moiety of pyrimidine-based antigens is recognized by Tyr-95 residue in the CDR3 alpha loop of the invariant TRAV1-2 TCR. In terms of assembly, homodimerizes and does not associate with B2M. N-glycosylated. Ubiquitous. Low expression is detected in peripheral blood B cells, T cells, monocytes and in bronchial epithelial cells (at protein level). Expressed in plasmablasts or plasma B cells in the lamina propria of ileum, appendix and colon (at protein level). Highly expressed on a subset of CD45-positive CD3-positive thymocytes (at protein level).

The protein localises to the cell membrane. It localises to the endoplasmic reticulum membrane. Its subcellular location is the golgi apparatus membrane. The protein resides in the early endosome membrane. It is found in the late endosome membrane. The protein localises to the secreted. Its activity is regulated as follows. Inhibited by pterin-based metabolites such as 6-formylpterin (6-FP, a product of folic acid photodegradation). 6-FP competitively inhibits MAIT cell activation by 5-OP-RU. Modulated by commonly prescribed anti-inflammatory drug metabolites. Inhibited by salicilates such as 3-formylsalicylic and 5-formylsalicylic acids. Activated by diclofenac and/or its hydroxy metabolites. Functionally, antigen-presenting molecule specialized in displaying microbial pyrimidine-based metabolites to alpha-beta T cell receptors (TCR) on innate-type mucosal-associated invariant T (MAIT) cells. In complex with B2M preferentially presents riboflavin-derived metabolites to semi-invariant TRAV1.2 TCRs on MAIT cells, guiding immune surveillance of the microbial metabolome at mucosal epithelial barriers. Signature pyrimidine-based microbial antigens are generated via non-enzymatic condensation of metabolite intermediates of the riboflavin pathway with by-products arising from other metabolic pathways such as glycolysis. Typical potent antigenic metabolites are 5-(2-oxoethylideneamino)-6-D-ribitylaminouracil (5-OE-RU) and 5-(2-oxopropylideneamino)-6-D-ribitylaminouracil (5-OP-RU), products of condensation of 5-amino-6-D-ribityaminouracil (5-A-RU) with glyoxal or methylglyoxal by-products, respectively. May present microbial antigens to various TRAV1-2-negative MAIT cell subsets, providing for unique recognition of diverse microbes, including pathogens that do not synthesize riboflavin. Upon antigen recognition, elicits rapid innate-type MAIT cell activation to eliminate pathogenic microbes by directly killing infected cells. During T cell development, drives thymic selection and post-thymic terminal differentiation of MAIT cells in a process dependent on commensal microflora. Acts as an immune sensor of cancer cell metabolome. May present a tumor-specific or -associated metabolite essential for cancer cell survival to a 'pan-cancer' TCR consisting of TRAV38.2-DV8*TRAJ31 alpha chain paired with a TRBV25.1*TRBJ2.3 beta chain on a non-MAIT CD8-positive T cell clone (MC.7.G5), triggering T cell-mediated killing of a wide range of cancer cell types. In terms of biological role, allele MR1*01: Presents microbial-derived metabolite 5-OP-RU to semi-invariant TRAV1.2-TRAJ33-TRBV6.1 (A-F7) TCR on MAIT cells. Presents nucleobase carbonyl adducts generated during oxidative stress. Captures M3Ade, a nucleobase adduct composed of one adenine modified by a malondialdehyde trimer, for recognition by MR1-restricted T cell clones expressing a polyclonal TCR repertoire. Displays moderate binding affinity toward tumor-enriched pyridoxal and pyridoxal 5'-phosphate antigens. Its function is as follows. Allele MR1*04: Presents tumor-enriched metabolite pyridoxal to pan-cancer 7.G5 TCR on T cells enabling preferential recognition of cancer cells. May act as an alloantigen. This Homo sapiens (Human) protein is Major histocompatibility complex class I-related protein 1.